A 402-amino-acid chain; its full sequence is Serine/threonine transporter SstT (402 aa).

The next 9 helical transmembrane spans lie at 19-39, 43-63, 86-106, 138-158, 179-199, 212-232, 287-307, 327-347, and 354-374; these read IGVV…AIGL, LFVG…VISA, TFAA…TLIL, AITE…GLAM, VVKW…FTSI, LLIL…NPII, IPLG…ILTL, VVAA…LLLI, and FGIS…VGVI.

The protein belongs to the dicarboxylate/amino acid:cation symporter (DAACS) (TC 2.A.23) family.

The protein localises to the cell membrane. It catalyses the reaction L-serine(in) + Na(+)(in) = L-serine(out) + Na(+)(out). The enzyme catalyses L-threonine(in) + Na(+)(in) = L-threonine(out) + Na(+)(out). Its function is as follows. Involved in the import of serine and threonine into the cell, with the concomitant import of sodium (symport system). The chain is Serine/threonine transporter SstT from Streptococcus agalactiae serotype III (strain NEM316).